A 41-amino-acid polypeptide reads, in one-letter code: MKVVSSLKSLKKRDKDCQIVKRRGKIFVINKKKKRFKAKQG.

This sequence belongs to the bacterial ribosomal protein bL36 family.

This is Large ribosomal subunit protein bL36 from Rickettsia canadensis (strain McKiel).